The sequence spans 103 residues: Small ribosomal subunit protein bS20 (103 aa).

Over residues 1-20 the composition is skewed to basic residues; that stretch reads MATAKPKKKNPRLASGRKRV. Positions 1 to 31 are disordered; sequence MATAKPKKKNPRLASGRKRVRQDTKLNAANT.

The protein belongs to the bacterial ribosomal protein bS20 family.

In terms of biological role, binds directly to 16S ribosomal RNA. In Polaromonas sp. (strain JS666 / ATCC BAA-500), this protein is Small ribosomal subunit protein bS20.